The sequence spans 185 residues: ATP synthase subunit delta (185 aa).

Belongs to the ATPase delta chain family. In terms of assembly, F-type ATPases have 2 components, F(1) - the catalytic core - and F(0) - the membrane proton channel. F(1) has five subunits: alpha(3), beta(3), gamma(1), delta(1), epsilon(1). CF(0) has four main subunits: a(1), b(1), b'(1) and c(10-14). The alpha and beta chains form an alternating ring which encloses part of the gamma chain. F(1) is attached to F(0) by a central stalk formed by the gamma and epsilon chains, while a peripheral stalk is formed by the delta, b and b' chains.

Its subcellular location is the cellular thylakoid membrane. Its function is as follows. F(1)F(0) ATP synthase produces ATP from ADP in the presence of a proton or sodium gradient. F-type ATPases consist of two structural domains, F(1) containing the extramembraneous catalytic core and F(0) containing the membrane proton channel, linked together by a central stalk and a peripheral stalk. During catalysis, ATP synthesis in the catalytic domain of F(1) is coupled via a rotary mechanism of the central stalk subunits to proton translocation. Functionally, this protein is part of the stalk that links CF(0) to CF(1). It either transmits conformational changes from CF(0) to CF(1) or is implicated in proton conduction. This Synechocystis sp. (strain ATCC 27184 / PCC 6803 / Kazusa) protein is ATP synthase subunit delta.